The chain runs to 167 residues: 3-dehydroquinate dehydratase (167 aa).

The Proton acceptor role is filled by tyrosine 22. Substrate-binding residues include asparagine 76, histidine 82, and aspartate 89. The active-site Proton donor is the histidine 102. Residues 103–104 and arginine 113 each bind substrate; that span reads LT.

This sequence belongs to the type-II 3-dehydroquinase family. In terms of assembly, homododecamer.

The catalysed reaction is 3-dehydroquinate = 3-dehydroshikimate + H2O. It participates in metabolic intermediate biosynthesis; chorismate biosynthesis; chorismate from D-erythrose 4-phosphate and phosphoenolpyruvate: step 3/7. In terms of biological role, catalyzes a trans-dehydration via an enolate intermediate. The chain is 3-dehydroquinate dehydratase from Helicobacter pylori (strain P12).